The chain runs to 362 residues: Hepatic sodium/bile acid cotransporter (362 aa).

The Extracellular portion of the chain corresponds to Met1–Ala22. 2 N-linked (GlcNAc...) asparagine glycosylation sites follow: Asn5 and Asn11. The helical transmembrane segment at Thr23–Cys44 threads the bilayer. The Cytoplasmic portion of the chain corresponds to Thr45–Glu47. A helical membrane pass occupies residues Phe48–Phe83. Residues His84–Ser86 are Extracellular-facing. A discontinuously helical transmembrane segment spans residues Asn87–Met112. Over Lys113–Asp115 the chain is Cytoplasmic. Residues Met116–Ser142 traverse the membrane as a helical segment. Topologically, residues Lys143–Tyr156 are extracellular. The chain crosses the membrane as a helical span at residues Lys157–Lys179. Residues Arg180 to Tyr183 are Cytoplasmic-facing. A helical transmembrane segment spans residues Val184–Val217. The Extracellular portion of the chain corresponds to Met218–Thr219. A helical transmembrane segment spans residues Pro220–Leu243. Residues Phe244–Asn247 lie on the Cytoplasmic side of the membrane. The discontinuously helical transmembrane segment at Pro248–Thr273 threads the bilayer. At Phe274–Gly280 the chain is on the extracellular side. A helical transmembrane segment spans residues Pro281–Lys311. Topologically, residues Pro312 to Asn362 are cytoplasmic. Thr330 carries the post-translational modification Phosphothreonine. The disordered stretch occupies residues Ala333–Asn362. Residues Asn353 to Asn362 are compositionally biased toward polar residues.

The protein belongs to the bile acid:sodium symporter (BASS) (TC 2.A.28) family. As to expression, highly expressed in liver and low expression in kidney.

The protein localises to the cell membrane. The catalysed reaction is taurocholate(out) + 2 Na(+)(out) = taurocholate(in) + 2 Na(+)(in). It catalyses the reaction taurochenodeoxycholate(out) + 2 Na(+)(out) = taurochenodeoxycholate(in) + 2 Na(+)(in). The enzyme catalyses tauroursodeoxycholate(out) + 2 Na(+)(out) = tauroursodeoxycholate(in) + 2 Na(+)(in). It carries out the reaction glycocholate(out) + 2 Na(+)(out) = glycocholate(in) + 2 Na(+)(in). The catalysed reaction is estrone 3-sulfate(out) + 2 Na(+)(out) = estrone 3-sulfate(in) + 2 Na(+)(in). It catalyses the reaction cholate(out) + 2 Na(+)(out) = cholate(in) + 2 Na(+)(in). The enzyme catalyses tauronorcholate(out) + 2 Na(+)(out) = tauronorcholate(in) + 2 Na(+)(in). It carries out the reaction taurodeoxycholate(out) + 2 Na(+)(out) = taurodeoxycholate(in) + 2 Na(+)(in). The catalysed reaction is tauroallocholate(out) + 2 Na(+)(out) = tauroallocholate(in) + 2 Na(+)(in). It catalyses the reaction taurohyodeoxycholate(out) + 2 Na(+)(out) = taurohyodeoxycholate(in) + 2 Na(+)(in). The enzyme catalyses taurohyocholate(out) + 2 Na(+)(out) = taurohyocholate(in) + 2 Na(+)(in). It carries out the reaction tauro-beta-muricholate(out) + 2 Na(+)(out) = tauro-beta-muricholate(in) + 2 Na(+)(in). The transport of bile acids is sodium-dependent. As a major transporter of conjugated bile salts from plasma into the hepatocyte, it plays a key role in the enterohepatic circulation of bile salts necessary for the solubilization and absorption of dietary fat and fat-soluble vitamins. It is strictly dependent on the extracellular presence of sodium. It exhibits broad substrate specificity and transports various bile acids, such as taurocholate, cholate, as well as non-bile acid organic compounds, such as estrone sulfate. Works collaboratively with the ileal transporter (NTCP2), the organic solute transporter (OST), and the bile salt export pump (BSEP), to ensure efficacious biological recycling of bile acids during enterohepatic circulation. The chain is Hepatic sodium/bile acid cotransporter (Slc10a1) from Rattus norvegicus (Rat).